The sequence spans 449 residues: GTPase Der (449 aa).

2 consecutive EngA-type G domains span residues 4-174 (PIVA…PPKT) and 183-358 (LRIA…VQRQ). GTP-binding positions include 10-17 (GRPNVGKS), 57-61 (DTAGV), 126-129 (NKCD), 189-196 (GRPNVGKS), 236-240 (DTAGI), and 301-304 (NKWD). Residues 359–444 (KRVPTSELNN…PIVIVFRSRE (86 aa)) enclose the KH-like domain.

This sequence belongs to the TRAFAC class TrmE-Era-EngA-EngB-Septin-like GTPase superfamily. EngA (Der) GTPase family. As to quaternary structure, associates with the 50S ribosomal subunit.

Functionally, GTPase that plays an essential role in the late steps of ribosome biogenesis. The polypeptide is GTPase Der (Chloroflexus aurantiacus (strain ATCC 29366 / DSM 635 / J-10-fl)).